The primary structure comprises 227 residues: Venom allergen 5 (227 aa).

The N-terminal stretch at 1–23 is a signal peptide; the sequence is MEISGLVYLIIIVTIIDLPYGKA. 4 disulfide bridges follow: cysteine 27–cysteine 40, cysteine 31–cysteine 124, cysteine 49–cysteine 117, and cysteine 193–cysteine 210. The region spanning 68–212 is the SCP domain; sequence LKEHNDFRQK…WHYHYLVCNY (145 aa).

Belongs to the CRISP family. Venom allergen 5-like subfamily. Expressed by the venom gland.

The protein localises to the secreted. The chain is Venom allergen 5 from Vespula maculifrons (Eastern yellow jacket).